The chain runs to 278 residues: Tryptophan synthase alpha chain (278 aa).

Active-site proton acceptor residues include Glu-50 and Asp-61.

The protein belongs to the TrpA family. In terms of assembly, tetramer of two alpha and two beta chains.

The enzyme catalyses (1S,2R)-1-C-(indol-3-yl)glycerol 3-phosphate + L-serine = D-glyceraldehyde 3-phosphate + L-tryptophan + H2O. The protein operates within amino-acid biosynthesis; L-tryptophan biosynthesis; L-tryptophan from chorismate: step 5/5. In terms of biological role, the alpha subunit is responsible for the aldol cleavage of indoleglycerol phosphate to indole and glyceraldehyde 3-phosphate. This is Tryptophan synthase alpha chain from Nitrobacter hamburgensis (strain DSM 10229 / NCIMB 13809 / X14).